Consider the following 230-residue polypeptide: 6-carboxyhexanoate--CoA ligase (230 aa).

This sequence belongs to the BioW family. As to quaternary structure, homodimer. Mg(2+) is required as a cofactor.

The enzyme catalyses heptanedioate + ATP + CoA = 6-carboxyhexanoyl-CoA + AMP + diphosphate. It functions in the pathway metabolic intermediate metabolism; pimeloyl-CoA biosynthesis; pimeloyl-CoA from pimelate: step 1/1. Its function is as follows. Catalyzes the transformation of pimelate into pimeloyl-CoA with concomitant hydrolysis of ATP to AMP. The protein is 6-carboxyhexanoate--CoA ligase of Staphylococcus aureus (strain MSSA476).